A 688-amino-acid chain; its full sequence is Potassium-transporting ATPase ATP-binding subunit (688 aa).

4 helical membrane-spanning segments follow: residues 37–57 (FIVY…LFGI), 65–85 (ILFI…AEAI), 219–239 (IALQ…TASL), and 262–282 (LALL…AIGI). D313 serves as the catalytic 4-aspartylphosphate intermediate. ATP contacts are provided by residues D350, E354, 383-390 (FTAKTRMS), and K401. 2 residues coordinate Mg(2+): D524 and D528. Helical transmembrane passes span 586–606 (IAND…GLFP), 622–642 (AILS…PLAL), and 668–688 (IIAP…LGIV).

This sequence belongs to the cation transport ATPase (P-type) (TC 3.A.3) family. Type IA subfamily. As to quaternary structure, the system is composed of three essential subunits: KdpA, KdpB and KdpC.

The protein localises to the cell membrane. The catalysed reaction is K(+)(out) + ATP + H2O = K(+)(in) + ADP + phosphate + H(+). Its function is as follows. Part of the high-affinity ATP-driven potassium transport (or Kdp) system, which catalyzes the hydrolysis of ATP coupled with the electrogenic transport of potassium into the cytoplasm. This subunit is responsible for energy coupling to the transport system and for the release of the potassium ions to the cytoplasm. This chain is Potassium-transporting ATPase ATP-binding subunit, found in Clostridium perfringens (strain ATCC 13124 / DSM 756 / JCM 1290 / NCIMB 6125 / NCTC 8237 / Type A).